The primary structure comprises 253 residues: MNGPIIMTREERMKIVHEIKERILDKYGDDVKAIGVYGSLGRQTDGPYSDIEMMCVMSTEEAEFSHEWTTGEWKVEVNFDSEEILLDYASQVESDWPLTHGQFFSILPIYDSGGYLEKVYQTAKSVEAQKFHDAICALIVEELFEYAGKWRNIRVQGPTTFLPSLTVQVAMAGAMLIGLHHRICYTTSASVLTEAVKQSDLPSGYDHLCQFVMSGQLSDSEKLLESLENFWNGIQEWTERHGYIVDVSKRIPF.

In terms of assembly, homodimer.

The catalysed reaction is kanamycin A + ATP = 4'-adenylylkanamycin A + diphosphate. It carries out the reaction amikacin + ATP = 4'-adenylylamikacin + diphosphate. The enzyme catalyses neomycin B + ATP = 4'-adenylylneomycin B + diphosphate. It catalyses the reaction paromomycin + ATP = 4'-adenylylparomomycin + diphosphate. The catalysed reaction is ribostamycin + ATP = 4'-adenylylribostamycin + diphosphate. It carries out the reaction tobramycin + ATP = 4'-adenylyltobramycin + diphosphate. The enzyme catalyses kanamycin A + CTP = 4'-cytidylylkanamycin A + diphosphate. It catalyses the reaction kanamycin A + GTP = 4'-guanylylkanamycin A + diphosphate. The catalysed reaction is kanamycin A + ITP = 4'-inosinylylkanamycin A + diphosphate. It carries out the reaction dTTP + kanamycin A = 4'-thymidylylkanamycin A + diphosphate. The enzyme catalyses kanamycin A + UTP = 4'-uridylylkanamycin A + diphosphate. It catalyses the reaction kanamycin A + dATP = 4'-(2'-deoxyadenylyl)kanamycin A + diphosphate. The catalysed reaction is kanamycin A + dCTP = 4'-(2'-deoxycytidylyl)kanamycin A + diphosphate. It carries out the reaction kanamycin A + dGTP = 4'-(2'-deoxyguanylyl)kanamycin A + diphosphate. The enzyme catalyses dUTP + kanamycin A = 4'-(2'-deoxyuridylyl)kanamycin A + diphosphate. It catalyses the reaction amikacin + GTP = 4'-guanylylamikacin + diphosphate. The catalysed reaction is amikacin + ITP = 4'-inosinylylamikacin + diphosphate. It carries out the reaction amikacin + CTP = 4'-cytidylylamikacin + diphosphate. The enzyme catalyses amikacin + UTP = 4'-uridylylamikacin + diphosphate. It catalyses the reaction amikacin + dTTP = 4'-thymidylylamikacin + diphosphate. In terms of biological role, inactivates aminoglycoside antibiotics such as kanamycin by catalyzing the transfer of a nucleotidyl group from nucleoside triphosphates such as (d)ATP to the 4'-hydroxyl group of the aminoglycoside. The chain is Aminoglycoside nucleotidyltransferase (4') from Bacillus sp.